Reading from the N-terminus, the 726-residue chain is Probable cadmium-transporting ATPase (726 aa).

One can recognise an HMA domain in the interval 11–74 (DKQVYRVEGF…AGAFENLKVF (64 aa)). Residues Cys-22 and Cys-25 each contribute to the Cd(2+) site. The next 5 helical transmembrane spans lie at 105–125 (STLL…FVNG), 129–149 (LVTS…LFKV), 163–179 (TLMT…GEWA), 335–355 (IIMV…GGSW), and 363–383 (LAVL…ISIV). The active-site 4-aspartylphosphate intermediate is the Asp-414. Helical transmembrane passes span 671 to 693 (LNII…LLVI) and 698 to 720 (TLWI…SLRL).

Belongs to the cation transport ATPase (P-type) (TC 3.A.3) family. Type IB subfamily.

Its subcellular location is the cell membrane. The enzyme catalyses Cd(2+)(in) + ATP + H2O = Cd(2+)(out) + ADP + phosphate + H(+). In terms of biological role, couples the hydrolysis of ATP with the export of cadmium. This chain is Probable cadmium-transporting ATPase (cadA), found in Staphylococcus aureus (strain MRSA252).